A 198-amino-acid chain; its full sequence is Protein GrpE (198 aa).

The span at 1–14 (MSNEENKINEEALK) shows a compositional bias: basic and acidic residues. Residues 1–20 (MSNEENKINEEALKQQDAAE) are disordered.

It belongs to the GrpE family. Homodimer.

It localises to the cytoplasm. Its function is as follows. Participates actively in the response to hyperosmotic and heat shock by preventing the aggregation of stress-denatured proteins, in association with DnaK and GrpE. It is the nucleotide exchange factor for DnaK and may function as a thermosensor. Unfolded proteins bind initially to DnaJ; upon interaction with the DnaJ-bound protein, DnaK hydrolyzes its bound ATP, resulting in the formation of a stable complex. GrpE releases ADP from DnaK; ATP binding to DnaK triggers the release of the substrate protein, thus completing the reaction cycle. Several rounds of ATP-dependent interactions between DnaJ, DnaK and GrpE are required for fully efficient folding. The polypeptide is Protein GrpE (Vibrio vulnificus (strain YJ016)).